Consider the following 220-residue polypeptide: Ribosomal RNA small subunit methyltransferase Nep1 (220 aa).

Residues Gly178, Gly183, and 196 to 201 (LYREPL) each bind S-adenosyl-L-methionine.

The protein belongs to the class IV-like SAM-binding methyltransferase superfamily. RNA methyltransferase NEP1 family. Homodimer.

The catalysed reaction is a pseudouridine in rRNA + S-adenosyl-L-methionine = an N(1)-methylpseudouridine in rRNA + S-adenosyl-L-homocysteine + H(+). Methyltransferase involved in ribosomal biogenesis. Specifically catalyzes the N1-methylation of the pseudouridine corresponding to position 914 in M.jannaschii 16S rRNA. The protein is Ribosomal RNA small subunit methyltransferase Nep1 of Thermococcus kodakarensis (strain ATCC BAA-918 / JCM 12380 / KOD1) (Pyrococcus kodakaraensis (strain KOD1)).